A 327-amino-acid chain; its full sequence is Melanoma-associated antigen B18 (327 aa).

Residues 1-19 (MPRGQKSKLRAREKRRQAR) show a composition bias toward basic residues. Residues 1–85 (MPRGQKSKLR…SSDDSEDTED (85 aa)) are disordered. The segment covering 46 to 70 (MPTSPNMPMGEQSTFSHSYTSTSDQ) has biased composition (polar residues). The MAGE domain occupies 91-289 (INHKVVLLVQ…DSFPTLYEAA (199 aa)).

In terms of assembly, interacts with LNX1. As to expression, expressed in testis, stomach, large intestine, small intestine, spleen, lymph node, bone marrow lymphocytes and blood T-lymphocytes. Not detected in brain, heart, lung, liver or kidney (at protein level).

The protein localises to the cytoplasm. Its function is as follows. May enhance ubiquitin ligase activity of RING-type zinc finger-containing E3 ubiquitin-protein ligases. Proposed to act through recruitment and/or stabilization of the Ubl-conjugating enzyme (E2) at the E3:substrate complex. This is Melanoma-associated antigen B18 from Mus musculus (Mouse).